We begin with the raw amino-acid sequence, 263 residues long: L-aspartate dehydrogenase (263 aa).

NAD(+) contacts are provided by alanine 120 and asparagine 186. Histidine 216 is a catalytic residue.

The protein belongs to the L-aspartate dehydrogenase family.

The enzyme catalyses L-aspartate + NADP(+) + H2O = oxaloacetate + NH4(+) + NADPH + H(+). It carries out the reaction L-aspartate + NAD(+) + H2O = oxaloacetate + NH4(+) + NADH + H(+). It participates in cofactor biosynthesis; NAD(+) biosynthesis; iminoaspartate from L-aspartate (dehydrogenase route): step 1/1. Functionally, specifically catalyzes the NAD or NADP-dependent dehydrogenation of L-aspartate to iminoaspartate. The chain is L-aspartate dehydrogenase from Acinetobacter baumannii (strain AB307-0294).